The primary structure comprises 555 residues: F-box protein COS111 (555 aa).

Disordered regions lie at residues 31–82 (MSVS…SVSN) and 124–147 (DHSI…KQHH). Low complexity predominate over residues 32–42 (SVSSRSSQEES). Positions 48–61 (ESVSSLSMQEQQTE) are enriched in polar residues. Residues 129 to 142 (SGVTRSTVSTVRPT) show a composition bias toward low complexity. One can recognise an F-box domain in the interval 196–246 (HKDLNSLPHEIMSKIVSHLDQRDVTMCLYVNKNMYSTAVRQLYKEPFFSST). Residues 327 to 346 (SSSSLSCSRTSSNSNSSTES) are compositionally biased toward low complexity. The tract at residues 327–354 (SSSSLSCSRTSSNSNSSTESKPVKKRRS) is disordered.

Its function is as follows. F-box protein probably involved in ubiquitin conjugation pathway. The polypeptide is F-box protein COS111 (COS111) (Yarrowia lipolytica (strain CLIB 122 / E 150) (Yeast)).